The primary structure comprises 481 residues: Glutamyl-tRNA(Gln) amidotransferase subunit A (481 aa).

Active-site charge relay system residues include K78 and S153. The active-site Acyl-ester intermediate is the S177.

It belongs to the amidase family. GatA subfamily. In terms of assembly, heterotrimer of A, B and C subunits.

It catalyses the reaction L-glutamyl-tRNA(Gln) + L-glutamine + ATP + H2O = L-glutaminyl-tRNA(Gln) + L-glutamate + ADP + phosphate + H(+). Its function is as follows. Allows the formation of correctly charged Gln-tRNA(Gln) through the transamidation of misacylated Glu-tRNA(Gln) in organisms which lack glutaminyl-tRNA synthetase. The reaction takes place in the presence of glutamine and ATP through an activated gamma-phospho-Glu-tRNA(Gln). The sequence is that of Glutamyl-tRNA(Gln) amidotransferase subunit A from Borrelia garinii subsp. bavariensis (strain ATCC BAA-2496 / DSM 23469 / PBi) (Borreliella bavariensis).